A 593-amino-acid polypeptide reads, in one-letter code: Probable metalloprotease ARX1 (593 aa).

Belongs to the peptidase M24 family. As to quaternary structure, component of the nucleoplasmic and cytoplasmic pre-60S ribosomal particles. Interacts directly with REI1.

The protein localises to the cytoplasm. It localises to the nucleus. Probable metalloprotease involved in proper assembly of pre-ribosomal particles during the biogenesis of the 60S ribosomal subunit. Accompanies the pre-60S particles to the cytoplasm. This is Probable metalloprotease ARX1 (ARX1) from Saccharomyces cerevisiae (strain ATCC 204508 / S288c) (Baker's yeast).